Consider the following 166-residue polypeptide: Large ribosomal subunit protein bL9 (166 aa).

The protein belongs to the bacterial ribosomal protein bL9 family.

Binds to the 23S rRNA. The sequence is that of Large ribosomal subunit protein bL9 from Psychrobacter arcticus (strain DSM 17307 / VKM B-2377 / 273-4).